Consider the following 487-residue polypeptide: Protein translocase subunit SecY (487 aa).

The Cytoplasmic segment spans residues 1–20; the sequence is MSWKDTAEPLLVRMPAVQRP. Residues 21–47 form a helical membrane-spanning segment; that stretch reads EGHVPFKRKLTWTGGVLLLYFFLTNVK. Topologically, residues 48 to 59 are extracellular; sequence LFGLDIDASQQV. The helical intramembrane region spans 60–67; sequence FGRFSSIL. A discontinuously helical transmembrane segment spans residues 60-88; that stretch reads FGRFSSILASGQGSIMQLGIGPIVTASIV. The stretch at 68-79 is an intramembrane region; sequence ASGQGSIMQLGI. An intramembrane region (helical) is located at residues 80 to 88; it reads GPIVTASIV. Over 89–110 the chain is Cytoplasmic; it reads LQLLGGADLLGLNTQDDPRDQI. A helical transmembrane segment spans residues 111–135; it reads LYQGLQKLLVLVMICLTGLPMVFAG. Topologically, residues 136–153 are extracellular; sequence GFLPADTAVANSLGIGTA. A helical transmembrane segment spans residues 154 to 178; sequence GVQWLIFAQMFVGGVLILFMDEVIS. The Cytoplasmic portion of the chain corresponds to 179-184; the sequence is KWGVGS. Residues 185 to 203 traverse the membrane as a helical segment; the sequence is GIGLFIVAGVSQRLVGGLL. Over 204 to 244 the chain is Extracellular; that stretch reads TAPFLGNSEGIIYTWYLFITGERGTGPVLAADGLQTVLLQG. A helical transmembrane segment spans residues 245 to 266; sequence ELLGLFTTVLIFAVVVYAESVR. Residues 267 to 291 lie on the Cytoplasmic side of the membrane; it reads VEIPLSNARVKGARGRFPVKLIYAS. A helical membrane pass occupies residues 292–313; the sequence is VLPMILVRALQANIQFLGRILN. The Extracellular segment spans residues 314-364; that stretch reads AQLGSMPAFLGTYANGQPTGGLFYFLAPIQSRGDWMWWLEGTAQPVWQILT. Residues 365–384 form a helical membrane-spanning segment; that stretch reads RVGIDLFVMLVGGAVFAVFW. Topologically, residues 385-427 are cytoplasmic; that stretch reads VETTDMGPEATAKQIHNSGMQIPGFRQNVGVIEKVLERYIPQV. The helical transmembrane segment at 428-446 threads the bilayer; it reads TVIGGALVGLLAVMANMLG. The Extracellular portion of the chain corresponds to 447-451; it reads TIGGV. The chain crosses the membrane as a helical span at residues 452–466; the sequence is SGTGLLLTVSITYKL. At 467–487 the chain is on the cytoplasmic side; sequence YEEIAEEQLMEMHPMMRQMFG.

This sequence belongs to the SecY/SEC61-alpha family. As to quaternary structure, component of the Sec protein translocase complex. Heterotrimer consisting of alpha (SecY), beta (SecG) and gamma (SecE) subunits. The heterotrimers can form oligomers, although 1 heterotrimer is thought to be able to translocate proteins. Interacts with the ribosome. May interact with SecDF, and other proteins may be involved.

The protein resides in the cell membrane. Its function is as follows. The central subunit of the protein translocation channel SecYEG. Consists of two halves formed by TMs 1-5 and 6-10. These two domains form a lateral gate at the front which open onto the bilayer between TMs 2 and 7, and are clamped together by SecE at the back. The channel is closed by both a pore ring composed of hydrophobic SecY resides and a short helix (helix 2A) on the extracellular side of the membrane which forms a plug. The plug probably moves laterally to allow the channel to open. The ring and the pore may move independently. The chain is Protein translocase subunit SecY from Haloarcula marismortui (strain ATCC 43049 / DSM 3752 / JCM 8966 / VKM B-1809) (Halobacterium marismortui).